We begin with the raw amino-acid sequence, 78 residues long: Probable [Fe-S]-dependent transcriptional repressor (78 aa).

Residues cysteine 56, cysteine 61, cysteine 64, and cysteine 70 each contribute to the iron-sulfur cluster site.

The protein belongs to the FeoC family.

May function as a transcriptional regulator that controls feoABC expression. This Escherichia coli (strain UTI89 / UPEC) protein is Probable [Fe-S]-dependent transcriptional repressor.